The chain runs to 76 residues: ATP synthase subunit 9, mitochondrial (76 aa).

2 helical membrane passes run 13 to 35 and 50 to 72; these read GIST…ALIQ and FAIL…SFLL.

Belongs to the ATPase C chain family. F-type ATPases have 2 components, CF(1) - the catalytic core - and CF(0) - the membrane proton channel. In yeast, the dimeric form of ATP synthase consists of 18 polypeptides: alpha, beta, gamma, delta, epsilon, 4 (B), 5 (OSCP), 6 (A), 8, 9 (C), d, E (Tim11), f, g, h, i, j and k.

The protein localises to the mitochondrion membrane. In terms of biological role, mitochondrial membrane ATP synthase (F(1)F(0) ATP synthase or Complex V) produces ATP from ADP in the presence of a proton gradient across the membrane which is generated by electron transport complexes of the respiratory chain. F-type ATPases consist of two structural domains, F(1) - containing the extramembraneous catalytic core and F(0) - containing the membrane proton channel, linked together by a central stalk and a peripheral stalk. During catalysis, ATP synthesis in the catalytic domain of F(1) is coupled via a rotary mechanism of the central stalk subunits to proton translocation. Part of the complex F(0) domain. A homomeric c-ring of probably 10 subunits is part of the complex rotary element. This chain is ATP synthase subunit 9, mitochondrial (ATP9), found in Eremothecium gossypii (strain ATCC 10895 / CBS 109.51 / FGSC 9923 / NRRL Y-1056) (Yeast).